Reading from the N-terminus, the 864-residue chain is DNA mismatch repair protein MutS (864 aa).

Residue 607 to 614 coordinates ATP; sequence GPNMGGKS.

This sequence belongs to the DNA mismatch repair MutS family.

Its function is as follows. This protein is involved in the repair of mismatches in DNA. It is possible that it carries out the mismatch recognition step. This protein has a weak ATPase activity. The sequence is that of DNA mismatch repair protein MutS from Neisseria meningitidis serogroup C (strain 053442).